Reading from the N-terminus, the 1371-residue chain is Serine protease pic autotransporter (1371 aa).

The first 55 residues, 1 to 55 (MNKVYSLKYCPVTGGLIVVSELASRVIKKTCRRLTHILLAGIPAVYLYYPQISQA), serve as a signal peptide directing secretion. The 246-residue stretch at 56 to 301 (GIVRSDIAYQ…NVIPTDYLNQ (246 aa)) folds into the Peptidase S6 domain. Catalysis depends on charge relay system residues H127, D155, and S258. Residues 1105–1371 (DTNGDAGAWA…AVNANFRYMF (267 aa)) enclose the Autotransporter domain.

Post-translationally, cleaved to release the mature protein from the outer membrane.

It is found in the periplasm. It localises to the secreted. The protein resides in the cell surface. The protein localises to the cell outer membrane. Involved in virulence of uropathogenic E.coli although it is not known how it contributes to it. Has no mucinase activity. This is Serine protease pic autotransporter (pic) from Escherichia coli O6:H1 (strain CFT073 / ATCC 700928 / UPEC).